The sequence spans 436 residues: Adenylosuccinate synthetase (436 aa).

Residues 12–18 (GDEGKGK) and 40–42 (GHT) each bind GTP. Catalysis depends on Asp13, which acts as the Proton acceptor. 2 residues coordinate Mg(2+): Asp13 and Gly40. Residues 13–16 (DEGK), 38–41 (NAGH), Thr128, Arg142, Gln223, Thr238, and Arg302 each bind IMP. His41 acts as the Proton donor in catalysis. 298-304 (TTTGRRR) contributes to the substrate binding site. GTP contacts are provided by residues Arg304, 330–332 (KLD), and 412–414 (SLG).

This sequence belongs to the adenylosuccinate synthetase family. As to quaternary structure, homodimer. It depends on Mg(2+) as a cofactor.

It localises to the cytoplasm. The enzyme catalyses IMP + L-aspartate + GTP = N(6)-(1,2-dicarboxyethyl)-AMP + GDP + phosphate + 2 H(+). It participates in purine metabolism; AMP biosynthesis via de novo pathway; AMP from IMP: step 1/2. Functionally, plays an important role in the de novo pathway of purine nucleotide biosynthesis. Catalyzes the first committed step in the biosynthesis of AMP from IMP. The sequence is that of Adenylosuccinate synthetase from Prochlorococcus marinus (strain MIT 9515).